Reading from the N-terminus, the 104-residue chain is Large ribosomal subunit protein uL24 (104 aa).

This sequence belongs to the universal ribosomal protein uL24 family. In terms of assembly, part of the 50S ribosomal subunit.

In terms of biological role, one of two assembly initiator proteins, it binds directly to the 5'-end of the 23S rRNA, where it nucleates assembly of the 50S subunit. Functionally, one of the proteins that surrounds the polypeptide exit tunnel on the outside of the subunit. The polypeptide is Large ribosomal subunit protein uL24 (Saccharopolyspora erythraea (strain ATCC 11635 / DSM 40517 / JCM 4748 / NBRC 13426 / NCIMB 8594 / NRRL 2338)).